Consider the following 60-residue polypeptide: Cytotoxin 2 (60 aa).

4 disulfides stabilise this stretch: C3–C21, C14–C38, C42–C53, and C54–C59.

This sequence belongs to the three-finger toxin family. Short-chain subfamily. Type IA cytotoxin sub-subfamily. As to quaternary structure, monomer in solution; Homodimer and oligomer in the presence of negatively charged lipids forming a pore with a size ranging between 20 and 30 Angstroms. Expressed by the venom gland.

The protein resides in the secreted. It localises to the target cell membrane. In terms of biological role, shows cytolytic activity on many different cells by forming pore in lipid membranes. In vivo, increases heart rate or kills the animal by cardiac arrest. In addition, it binds to heparin with high affinity, interacts with Kv channel-interacting protein 1 (KCNIP1) in a calcium-independent manner, and binds to integrin alpha-V/beta-3 (ITGAV/ITGB3) with moderate affinity. The sequence is that of Cytotoxin 2 from Naja annulifera (Banded Egyptian cobra).